The primary structure comprises 339 residues: NADP-dependent dehydrogenase M3 (339 aa).

NADP(+)-binding residues include S49, I51, D93, Y206, K210, I240, and Q244. Y206 acts as the Proton acceptor in catalysis. K210 acts as the Lowers pKa of active site Tyr in catalysis.

It belongs to the short-chain dehydrogenases/reductases (SDR) family. As to quaternary structure, homodimer.

The protein resides in the cytoplasm. It is found in the cytosol. Its pathway is secondary metabolite biosynthesis. Its function is as follows. NADP-dependent dehydrogenase; part of the gene cluster that mediates the biosynthesis of squalestatin S1 (SQS1, also known as zaragozic acid A), a heavily oxidized fungal polyketide that offers potent cholesterol lowering activity by targeting squalene synthase (SS). SQS1 is composed of a 2,8-dioxobicyclic[3.2.1]octane-3,4,5-tricarboxyclic acid core that is connected to two lipophilic polyketide arms. These initial steps feature the priming of an unusual benzoic acid starter unit onto the highly reducing polyketide synthase pks2, followed by oxaloacetate extension and product release to generate a tricarboxylic acid containing product. The phenylalanine ammonia lyase (PAL) M7 and the acyl-CoA ligase M9 are involved in transforming phenylalanine into benzoyl-CoA. The citrate synthase-like protein R3 is involved in connecting the C-alpha-carbons of the hexaketide chain and oxaloacetate to afford the tricarboxylic acid unit. The potential hydrolytic enzymes, M8 and M10, are in close proximity to pks2 and may participate in product release. On the other side, the tetraketide arm is synthesized by a the squalestatin tetraketide synthase pks1 and enzymatically esterified to the core in the last biosynthetic step, by the acetyltransferase M4. The biosynthesis of the tetraketide must involve 3 rounds of chain extension. After the first and second rounds methyl-transfer occurs, and in all rounds of extension the ketoreductase and dehydratase are active. The enoyl reductase and C-MeT of pks1 are not active in the final round of extension. The acetyltransferase M4 appears to have a broad substrate selectivity for its acyl CoA substrate, allowing the in vitro synthesis of novel squalestatins. The biosynthesis of SQS1 requires several oxidative steps likely performed by oxidoreductases M1, R1 and R2. Finally, in support of the identification of the cluster as being responsible for SQS1 production, the cluster contains a gene encoding a putative squalene synthase (SS) R6, suggesting a likely mechanism for self-resistance. This Phoma sp. (strain ATCC 20986 / MF5453) protein is NADP-dependent dehydrogenase M3.